The sequence spans 323 residues: tRNA-dihydrouridine synthase B (323 aa).

Residues 16-18 (PMA) and Gln-70 each bind FMN. Cys-100 acts as the Proton donor in catalysis. Residues Lys-139, 200–202 (NGD), and 224–225 (GR) each bind FMN.

The protein belongs to the Dus family. DusB subfamily. FMN is required as a cofactor.

The enzyme catalyses a 5,6-dihydrouridine in tRNA + NAD(+) = a uridine in tRNA + NADH + H(+). The catalysed reaction is a 5,6-dihydrouridine in tRNA + NADP(+) = a uridine in tRNA + NADPH + H(+). In terms of biological role, catalyzes the synthesis of 5,6-dihydrouridine (D), a modified base found in the D-loop of most tRNAs, via the reduction of the C5-C6 double bond in target uridines. The polypeptide is tRNA-dihydrouridine synthase B (Proteus vulgaris).